A 409-amino-acid chain; its full sequence is Argininosuccinate synthase (409 aa).

ATP is bound by residues Ala10 to Ser18 and Ala37. Residues Tyr90 and Ser95 each coordinate L-citrulline. Gly120 contacts ATP. The L-aspartate site is built by Thr122, Asn126, and Asp127. Residue Asn126 coordinates L-citrulline. Arg130, Ser182, Ser191, Glu267, and Tyr279 together coordinate L-citrulline.

This sequence belongs to the argininosuccinate synthase family. Type 1 subfamily. In terms of assembly, homotetramer.

The protein resides in the cytoplasm. It catalyses the reaction L-citrulline + L-aspartate + ATP = 2-(N(omega)-L-arginino)succinate + AMP + diphosphate + H(+). Its pathway is amino-acid biosynthesis; L-arginine biosynthesis; L-arginine from L-ornithine and carbamoyl phosphate: step 2/3. This is Argininosuccinate synthase from Azoarcus sp. (strain BH72).